We begin with the raw amino-acid sequence, 682 residues long: RNA helicase NPH-II (682 aa).

The Helicase ATP-binding domain maps to 181-354 (FELLRKRKQI…EFLPDVEFYH (174 aa)). 194-201 (GSTGIGKT) provides a ligand contact to ATP. The DEXH box signature appears at 303-306 (DEIH). Residues 386 to 551 (NISTTLNWCR…KFKLSLPNDL (166 aa)) form the Helicase C-terminal domain.

It belongs to the DEAD box helicase family. DEAH subfamily. Monomer.

Its subcellular location is the virion. The catalysed reaction is ATP + H2O = ADP + phosphate + H(+). NTP-dependent helicase that catalyzes unidirectional unwinding of 3'tailed duplex RNAs and plays an important role during transcription of early mRNAs, presumably by preventing R-loop formation behind the elongating RNA polymerase. Might also play a role in the export of newly synthesized mRNA chains out of the core into the cytoplasm. Required for replication and propagation of viral particles. The protein is RNA helicase NPH-II (NPH2) of Vertebrata (FPV).